We begin with the raw amino-acid sequence, 443 residues long: Protoheme IX farnesyltransferase, mitochondrial (443 aa).

7 consecutive transmembrane segments (helical) span residues 174–194, 235–255, 257–277, 280–300, 309–329, 364–384, and 411–431; these read AAGF…LTSV, LAVS…TLGV, PLTG…YTPL, ISIA…VMGW, AGAF…FNAL, LLVL…FPIM, and LFFC…TCKR.

The protein belongs to the UbiA prenyltransferase family.

It is found in the mitochondrion membrane. It carries out the reaction heme b + (2E,6E)-farnesyl diphosphate + H2O = Fe(II)-heme o + diphosphate. Functionally, converts protoheme IX and farnesyl diphosphate to heme O. This is Protoheme IX farnesyltransferase, mitochondrial (COX10) from Homo sapiens (Human).